Reading from the N-terminus, the 313-residue chain is Olfactory receptor 4M2 (313 aa).

Residues 1–25 (METANYTKVTEFVLTGLSQTPEVQL) lie on the Extracellular side of the membrane. Asn-5 carries N-linked (GlcNAc...) asparagine glycosylation. Residues 26 to 49 (VLFVIFLSFYLFILPGNILIICTI) traverse the membrane as a helical segment. Topologically, residues 50 to 57 (SLDPHLTS) are cytoplasmic. Residues 58–79 (PMYFLLANLAFLDIWYSSITAP) traverse the membrane as a helical segment. Residues 80–100 (EMLIDFFVERKIISFDGCIAQ) lie on the Extracellular side of the membrane. A disulfide bridge connects residues Cys-97 and Cys-189. A helical membrane pass occupies residues 101–120 (LFFLHFAGASEMFLLTVMAF). Residues 121-139 (DLYTAICRPLHYATIMNQR) are Cytoplasmic-facing. Residues 140–158 (LCCILVALSWRGGFIHSII) form a helical membrane-spanning segment. Residues 159-195 (QVALIVRLPFCGPNELDSYFCDITQVVRIACANTFPE) are Extracellular-facing. The chain crosses the membrane as a helical span at residues 196-219 (ELVMICSSGLISVVCLIALLMSYA). The Cytoplasmic segment spans residues 220–237 (FLLALFKKLSGSGENTNR). A helical transmembrane segment spans residues 238-260 (AMSTCYSHITIVVLMFGPSIYIY). Residues 261 to 271 (ARPFDSFSLDK) are Extracellular-facing. A helical membrane pass occupies residues 272–291 (VVSVFNTLIFPLRNPIIYTL). The Cytoplasmic segment spans residues 292 to 313 (RNKEVKAAMRKLVTKYILCKEK).

The protein belongs to the G-protein coupled receptor 1 family.

It localises to the cell membrane. Functionally, odorant receptor. This Homo sapiens (Human) protein is Olfactory receptor 4M2 (OR4M2).